Here is a 436-residue protein sequence, read N- to C-terminus: Trigger factor (436 aa).

Residues 163-248 (GDRVTVDFEG…VKKIEAAHLP (86 aa)) enclose the PPIase FKBP-type domain.

Belongs to the FKBP-type PPIase family. Tig subfamily.

Its subcellular location is the cytoplasm. It carries out the reaction [protein]-peptidylproline (omega=180) = [protein]-peptidylproline (omega=0). Functionally, involved in protein export. Acts as a chaperone by maintaining the newly synthesized protein in an open conformation. Functions as a peptidyl-prolyl cis-trans isomerase. This Acidovorax ebreus (strain TPSY) (Diaphorobacter sp. (strain TPSY)) protein is Trigger factor.